Here is a 425-residue protein sequence, read N- to C-terminus: C2H2 type master regulator of conidiophore development brlA (425 aa).

Disordered regions lie at residues 28–72, 232–257, and 281–301; these read MASS…RHTG, KTHSPTTPVRSCSLGTTSGTDTPMSR, and VQRQPSRKVARKQSSKQSLSL. The segment covering 30–44 has biased composition (low complexity); that stretch reads SSFSPMESPTPTPTS. Polar residues predominate over residues 232-256; it reads KTHSPTTPVRSCSLGTTSGTDTPMS. Positions 285–294 are enriched in basic residues; the sequence is PSRKVARKQS. 2 consecutive C2H2-type zinc fingers follow at residues 321-345 and 351-376; these read KGRFKRQEHLKRHMKSHSKEKPHVC and ERAFSRSDNLNAHYTKTHSKRGGRNR. Basic residues predominate over residues 365–374; that stretch reads TKTHSKRGGR. The segment at 365–425 is disordered; the sequence is TKTHSKRGGR…RETSEEAWLE (61 aa).

The protein resides in the nucleus. Its function is as follows. BrlA, abaA and wetA are pivotal regulators of conidiophore development and conidium maturation. They act individually and together to regulate their own expression and that of numerous other sporulation-specific genes. Binds promoters of target genes at brlA response elements (BREs) containing the conserved sequence 5'-(C/A)(A/G)AGGG(G/A)-3'. Also coordinates the expression of carbohydrate-active enzymes and of the key effectors of cell wall remodeling during autolysis. In Aspergillus niger (strain ATCC MYA-4892 / CBS 513.88 / FGSC A1513), this protein is C2H2 type master regulator of conidiophore development brlA.